The primary structure comprises 991 residues: Translation initiation factor IF-2 (991 aa).

Disordered stretches follow at residues 126–220 and 325–359; these read QADH…DVGE and VKAA…VDEK. Polar residues-rich tracts occupy residues 138 to 160 and 201 to 210; these read QTES…TEPA and PAAQTESAVQ. Low complexity predominate over residues 326-340; it reads KAAGDGDTAPAADDA. The span at 343 to 353 shows a compositional bias: basic residues; it reads GKKKPGKKKKK. Residues 488–658 enclose the tr-type G domain; sequence IRPPVVTIMG…LTEAEIRELK (171 aa). The tract at residues 497-504 is G1; that stretch reads GHVDHGKT. 497-504 provides a ligand contact to GTP; it reads GHVDHGKT. Residues 522–526 are G2; that stretch reads GITQH. The G3 stretch occupies residues 544–547; it reads DTPG. Residues 544 to 548 and 598 to 601 contribute to the GTP site; these read DTPGH and NKID. Residues 598–601 form a G4 region; it reads NKID. Positions 634-636 are G5; the sequence is SAK.

The protein belongs to the TRAFAC class translation factor GTPase superfamily. Classic translation factor GTPase family. IF-2 subfamily.

Its subcellular location is the cytoplasm. Its function is as follows. One of the essential components for the initiation of protein synthesis. Protects formylmethionyl-tRNA from spontaneous hydrolysis and promotes its binding to the 30S ribosomal subunits. Also involved in the hydrolysis of GTP during the formation of the 70S ribosomal complex. The sequence is that of Translation initiation factor IF-2 from Chlorobium phaeobacteroides (strain DSM 266 / SMG 266 / 2430).